The sequence spans 365 residues: Synapse-associated protein 1 (365 aa).

The tract at residues 1 to 65 is disordered; it reads MFGGLSSWLG…QPPTEDPQFL (65 aa). The span at 52-62 shows a compositional bias: low complexity; sequence EQQQQPPTEDP. The 53-residue stretch at 172–224 folds into the BSD domain; that stretch reads VQFNFDFDQMYPVALVMLQEDELLSKMRFALVPKLVKEEVFWRNYFYRISLIK. Residues 237 to 259 are disordered; sequence QASGKEEKSSNRDDNLPLTEAVR. The span at 240 to 251 shows a compositional bias: basic and acidic residues; sequence GKEEKSSNRDDN. Thr-262 carries the phosphothreonine modification. Ser-283, Ser-298, and Ser-327 each carry phosphoserine. Positions 344–365 are disordered; it reads VAESEKRDENWDKEIEKMLQES. Residues 346-365 are compositionally biased toward basic and acidic residues; sequence ESEKRDENWDKEIEKMLQES.

Interacts (via phosphorylated form and BSD domain) with AKT1; this interaction is enhanced in a mTORC2-mediated manner in response to epidermal growth factor (EGF) stimulation and activates AKT1. In terms of processing, phosphorylated. Phosphorylation increases in a mTORC2-mediated manner in response to epidermal growth factor (EGF) stimulation. In terms of tissue distribution, expressed in the liver, kidney, skeletal muscle and in white and brown adipose tissues. Expressed in the cortex, cerebellum, thalamus, hippocampus, braistem, olfactory bulb, spinal cord and striatum of the brain. Expressed in most neuropil regions containing glutamatergic synaptic terminals. Expressed in the CA1, CA2 and CA3 perikarya of the hippocampus. Expressed in neurons and Purkinje cells (at the protein level).

Its subcellular location is the cytoplasm. The protein resides in the perinuclear region. It localises to the golgi apparatus. It is found in the perikaryon. The protein localises to the cell projection. Its subcellular location is the axon. The protein resides in the dendrite. It localises to the growth cone. It is found in the presynaptic cell membrane. The protein localises to the postsynaptic cell membrane. Its subcellular location is the membrane. Its function is as follows. Plays a role in adipocyte differentiation by promoting mTORC2-mediated phosphorylation of AKT1 at 'Ser-473' after growth factor stimulation. The protein is Synapse-associated protein 1 of Mus musculus (Mouse).